The sequence spans 226 residues: Uracil-DNA glycosylase (226 aa).

Aspartate 64 functions as the Proton acceptor in the catalytic mechanism.

Belongs to the uracil-DNA glycosylase (UDG) superfamily. UNG family.

It localises to the cytoplasm. It catalyses the reaction Hydrolyzes single-stranded DNA or mismatched double-stranded DNA and polynucleotides, releasing free uracil.. In terms of biological role, excises uracil residues from the DNA which can arise as a result of misincorporation of dUMP residues by DNA polymerase or due to deamination of cytosine. The polypeptide is Uracil-DNA glycosylase (Vibrio parahaemolyticus serotype O3:K6 (strain RIMD 2210633)).